Reading from the N-terminus, the 61-residue chain is Metallothionein-2 (61 aa).

M1 bears the N-acetylmethionine mark. Positions 1 to 29 (MDPNCSCASDGSCSCAGACKCKQCKCTSC) are beta. 18 residues coordinate a divalent metal cation: C5, C7, C13, C15, C19, C21, C24, C26, C29, C33, C34, C36, C37, C41, C44, C48, C50, and C57. The segment at 30–61 (KKSCCSCCPVGCAKCSQGCICKEASDKCSCCA) is alpha. A Phosphoserine modification is found at S58. 2 residues coordinate a divalent metal cation: C59 and C60.

This sequence belongs to the metallothionein superfamily. Type 1 family.

Its function is as follows. Metallothioneins have a high content of cysteine residues that bind various heavy metals; these proteins are transcriptionally regulated by both heavy metals and glucocorticoids. This chain is Metallothionein-2 (Mt2), found in Mus musculus (Mouse).